Reading from the N-terminus, the 94-residue chain is UPF0213 protein BH0048 (94 aa).

The GIY-YIG domain maps to 1-76 (MNHYVYILEC…KHLSRRKKEQ (76 aa)).

The protein belongs to the UPF0213 family.

The polypeptide is UPF0213 protein BH0048 (Halalkalibacterium halodurans (strain ATCC BAA-125 / DSM 18197 / FERM 7344 / JCM 9153 / C-125) (Bacillus halodurans)).